Reading from the N-terminus, the 59-residue chain is Potassium channel toxin alpha-KTx 1.2 (59 aa).

An N-terminal signal peptide occupies residues 1 to 22 (MKILSVLLLALIICSIIDWSEG). Position 23 is a pyrrolidone carboxylic acid (glutamine 23). Cystine bridges form between cysteine 29–cysteine 50, cysteine 35–cysteine 55, and cysteine 39–cysteine 57. The interval 48–55 (GKCMNKKC) is interaction with Ca(2+)-activated K(+) channels.

Belongs to the short scorpion toxin superfamily. Potassium channel inhibitor family. Alpha-KTx 01 subfamily. As to expression, expressed by the venom gland.

The protein resides in the secreted. Its function is as follows. Blocks calcium-activated potassium channels (Kd=43 nM on KCa1.1/KCNMA1). Has a potent presynaptic facilitatory action, with less effect on direct muscle stimulation. The chain is Potassium channel toxin alpha-KTx 1.2 from Leiurus hebraeus (Hebrew deathstalker scorpion).